The sequence spans 434 residues: Serine hydroxymethyltransferase (434 aa).

(6S)-5,6,7,8-tetrahydrofolate-binding positions include Leu-133 and 137–139; that span reads GHL. Lys-242 carries the N6-(pyridoxal phosphate)lysine modification.

The protein belongs to the SHMT family. In terms of assembly, homodimer. Requires pyridoxal 5'-phosphate as cofactor.

The protein localises to the cytoplasm. It catalyses the reaction (6R)-5,10-methylene-5,6,7,8-tetrahydrofolate + glycine + H2O = (6S)-5,6,7,8-tetrahydrofolate + L-serine. Its pathway is one-carbon metabolism; tetrahydrofolate interconversion. It participates in amino-acid biosynthesis; glycine biosynthesis; glycine from L-serine: step 1/1. Catalyzes the reversible interconversion of serine and glycine with tetrahydrofolate (THF) serving as the one-carbon carrier. This reaction serves as the major source of one-carbon groups required for the biosynthesis of purines, thymidylate, methionine, and other important biomolecules. Also exhibits THF-independent aldolase activity toward beta-hydroxyamino acids, producing glycine and aldehydes, via a retro-aldol mechanism. This chain is Serine hydroxymethyltransferase, found in Caulobacter sp. (strain K31).